The chain runs to 508 residues: Flavonoid 3',5'-hydroxylase 2 (508 aa).

C443 contributes to the heme binding site.

Belongs to the cytochrome P450 family. Requires heme as cofactor. As to expression, flowers.

It localises to the microsome. The protein localises to the endoplasmic reticulum. It carries out the reaction a 3',5'-unsubstituted flavanone + 2 reduced [NADPH--hemoprotein reductase] + 2 O2 = a 3',5'-dihydroxyflavanone + 2 oxidized [NADPH--hemoprotein reductase] + 2 H2O + 2 H(+). It functions in the pathway pigment biosynthesis; anthocyanin biosynthesis. Catalyzes the 3'5'-hydroxylation of naringenin and eriodictyol to form 5,7,3,'4',5'-pentahydroxyflavanone and 3',5'-hydroxylation of dihydrokaempferol and dihydroquercetin to form dihydromyricetin. The protein is Flavonoid 3',5'-hydroxylase 2 (CYP75A3) of Petunia hybrida (Petunia).